We begin with the raw amino-acid sequence, 718 residues long: Serine/threonine-protein kinase tousled-like 2 (718 aa).

Residues Gly24–Ser85 form a disordered region. Positions Pro29–Ser44 are enriched in polar residues. Basic and acidic residues predominate over residues Ser46–Arg61. Residues Ser73, Gln94, Leu99, and Ser102 each carry the phosphoserine modification. Residues Gln147–Thr176 are disordered. Residues Asn193–Glu244 form a required for interaction with TLK1 and DYNLL1/LC8 region. 3 coiled-coil regions span residues Asn193–Glu244, Ala285–Pro315, and His349–Gln397. The interval Leu310–Gly337 is disordered. A Protein kinase domain is found at Tyr408–Leu687. Residues Leu414–Val422 and Lys437 contribute to the ATP site. The Proton acceptor role is filled by Asp538. The residue at position 696 (Ser696) is a Phosphoserine; by CHEK1.

This sequence belongs to the protein kinase superfamily. Ser/Thr protein kinase family. In terms of assembly, monomer. May form homodimers; homodimerization may enhance autophosphoylation and enzymatic activity. Heterodimer with TLK1. Interacts with YWHAZ; association with 14-3-3 proteins such as YWHAZ regulates subcellular location. May also interact with FEZ1/LZTS1 and FEZ2. Interacts with CHD7 and CHD8. Interacts with DYNLL1/LC8. Requires Mg(2+) as cofactor. In terms of processing, phosphorylated at Ser-696, probably by CHEK1. Post-translationally, autophosphorylated; phosphorylation promotes the assembly of higher order oligomers and enzymatic activity. In terms of tissue distribution, ubiquitously expressed in all tissues examined, with high levels in heart and testis, in particular the pachytene spermatocytes and in round spermatids. Some evidence for the existence of a testis-specific isoform suggesting a role in spermatogenesis.

Its subcellular location is the nucleus. It localises to the nucleoplasm. It is found in the cytoplasm. The protein localises to the perinuclear region. The protein resides in the cytoskeleton. The enzyme catalyses L-seryl-[protein] + ATP = O-phospho-L-seryl-[protein] + ADP + H(+). The catalysed reaction is L-threonyl-[protein] + ATP = O-phospho-L-threonyl-[protein] + ADP + H(+). Its activity is regulated as follows. Cell cycle-regulated, with maximal activity in the S-phase. Rapidly and transiently inhibited by phosphorylation following the generation of DNA double-stranded breaks during S-phase, probably by CHEK1, possibly at Ser-696. This inhibition is cell cycle checkpoint- and ATM-dependent. Functionally, serine/threonine-protein kinase involved in the process of chromatin assembly and probably also DNA replication, transcription, repair, and chromosome segregation. Phosphorylates the chromatin assembly factors ASF1A and ASF1B. Phosphorylation of ASF1A prevents its proteasome-mediated degradation, thereby enhancing chromatin assembly. Negative regulator of amino acid starvation-induced autophagy. Testis-specific isoforms may play a role in spermatogenesis. Highly expressed in embryos throughout development. The protein is Serine/threonine-protein kinase tousled-like 2 (Tlk2) of Mus musculus (Mouse).